The chain runs to 555 residues: Potassium-transporting ATPase potassium-binding subunit (555 aa).

10 helical membrane passes run 2–22, 60–80, 130–150, 173–193, 246–266, 278–298, 374–394, 412–432, 483–503, and 525–545; these read IWVA…PTGI, QYAL…YFIF, IGIT…VMAF, VFLP…VPQT, MSNI…PFTY, ILFV…TTSE, AGFV…GLMV, LIAV…ALAL, LVMF…AASL, and GIFI…MLVL.

This sequence belongs to the KdpA family. The system is composed of three essential subunits: KdpA, KdpB and KdpC.

Its subcellular location is the cell membrane. In terms of biological role, part of the high-affinity ATP-driven potassium transport (or Kdp) system, which catalyzes the hydrolysis of ATP coupled with the electrogenic transport of potassium into the cytoplasm. This subunit binds the extracellular potassium ions and delivers the ions to the membrane domain of KdpB through an intramembrane tunnel. The polypeptide is Potassium-transporting ATPase potassium-binding subunit (Bacillus cereus (strain G9842)).